A 394-amino-acid polypeptide reads, in one-letter code: Actin-related protein 2 (394 aa).

The residue at position 1 (methionine 1) is an N-acetylmethionine. ATP contacts are provided by residues 160-162 (GDG) and 214-218 (RMIKE). Lysine 299 carries the post-translational modification N6-acetyllysine. 305-310 (GGSTMY) provides a ligand contact to ATP. Lysine 322 is modified (N6-acetyllysine).

It belongs to the actin family. ARP2 subfamily. In terms of assembly, component of the Arp2/3 complex composed of ACTR2/ARP2, ACTR3/ARP3, ARPC1B/p41-ARC, ARPC2/p34-ARC, ARPC3/p21-ARC, ARPC4/p20-ARC and ARPC5/p16-ARC. Interacts with AVIL.

The protein resides in the cytoplasm. It localises to the cytoskeleton. The protein localises to the cell projection. Its subcellular location is the nucleus. Its function is as follows. ATP-binding component of the Arp2/3 complex, a multiprotein complex that mediates actin polymerization upon stimulation by nucleation-promoting factor (NPF). The Arp2/3 complex mediates the formation of branched actin networks in the cytoplasm, providing the force for cell motility. Seems to contact the pointed end of the daughter actin filament. In podocytes, required for the formation of lamellipodia downstream of AVIL and PLCE1 regulation. In addition to its role in the cytoplasmic cytoskeleton, the Arp2/3 complex also promotes actin polymerization in the nucleus, thereby regulating gene transcription and repair of damaged DNA. The Arp2/3 complex promotes homologous recombination (HR) repair in response to DNA damage by promoting nuclear actin polymerization, leading to drive motility of double-strand breaks (DSBs). The polypeptide is Actin-related protein 2 (ACTR2) (Pongo abelii (Sumatran orangutan)).